We begin with the raw amino-acid sequence, 454 residues long: NADP-specific glutamate dehydrogenase (454 aa).

S2 is subject to N-acetylserine. The active site involves K114.

Belongs to the Glu/Leu/Phe/Val dehydrogenases family. In terms of assembly, homohexamer.

It catalyses the reaction L-glutamate + NADP(+) + H2O = 2-oxoglutarate + NH4(+) + NADPH + H(+). This is NADP-specific glutamate dehydrogenase (GDH) from Neurospora intermedia.